Reading from the N-terminus, the 665-residue chain is Syntabulin (665 aa).

Positions 1 to 22 (MGPLRESKKEQRVQHQEKEISR) are enriched in basic and acidic residues. A disordered region spans residues 1–271 (MGPLRESKKE…GVKPPNPEQY (271 aa)). The sufficient for interaction with KIF5B stretch occupies residues 2–421 (GPLRESKKEQ…DKLPDGLSLE (420 aa)). Residues 35–52 (PQQQQQQQNKVSPASESP) show a composition bias toward low complexity. A Phosphoserine modification is found at serine 54. A compositionally biased stretch (low complexity) spans 61–77 (FNPSSSGRSARTISSNS). Polar residues predominate over residues 85 to 101 (CPSSQSVSPVKTPSDTG). Serine 111 bears the Phosphoserine mark. The segment covering 141–162 (GGIIKPGSEADFSSSSSTGSIS) has biased composition (low complexity). The span at 168-180 (MSTTGNKRASFSR) shows a compositional bias: polar residues. The segment covering 225–245 (SYAPSSPSSSNSGSYKGSDCS) has biased composition (low complexity). The stretch at 275 to 357 (LQQKEVTVRH…MRSSLADKDK (83 aa)) forms a coiled coil. Positions 314–421 (REDWIEEECH…DKLPDGLSLE (108 aa)) are sufficient for interaction with STX1A. Phosphoserine is present on residues serine 400 and serine 557. A helical transmembrane segment spans residues 609 to 629 (FLVDLLAVAAPVVPTVLWAFS).

Interacts with STX1A and KIF5B.

It is found in the golgi apparatus membrane. Its function is as follows. Part of a kinesin motor-adapter complex that is critical for the anterograde axonal transport of active zone components and contributes to activity-dependent presynaptic assembly during neuronal development. This Mus musculus (Mouse) protein is Syntabulin (Sybu).